A 91-amino-acid polypeptide reads, in one-letter code: Virion membrane protein A14 homolog (91 aa).

The Intravirion portion of the chain corresponds to 1 to 12; the sequence is MDPLGFFRNRPS. The helical transmembrane segment at 13–33 threads the bilayer; the sequence is YVVVFGIILLIVACICAYIEL. Topologically, residues 34–46 are virion surface; that stretch reads SKSGKPADSALRS. A helical membrane pass occupies residues 47–67; the sequence is ISIISFILAILLLLGIILFSG. Over 68–91 the chain is Intravirion; the sequence is YNRYCTGNVVDESRYATSPGTEIQ.

This sequence belongs to the chordopoxvirinae A14 family. Homodimer; disulfide-linked. Interacts with A17. In terms of processing, phosphorylated by viral F10 kinase, phosphorylation state is regulated by H1 phosphatase.

It localises to the virion membrane. Its function is as follows. Envelope protein which is a major component of the mature virion (MV) membrane. Essential for membrane biogenesis. Is required, together with A17, to form bona fide crescents, which can progress to form the immature virion (IV) membrane. A14 and A17 form a lattice that is stabilized by disulfide bonds and serves as an anchor within the viral membrane to which several other proteins important in virion structure and morphogenesis attach. This is Virion membrane protein A14 homolog from Fowlpox virus (strain NVSL) (FPV).